The sequence spans 420 residues: D-tagatose-1,6-bisphosphate aldolase subunit GatZ (420 aa).

The protein belongs to the GatZ/KbaZ family. GatZ subfamily. In terms of assembly, forms a complex with GatY.

The protein operates within carbohydrate metabolism; D-tagatose 6-phosphate degradation; D-glyceraldehyde 3-phosphate and glycerone phosphate from D-tagatose 6-phosphate: step 2/2. Functionally, component of the tagatose-1,6-bisphosphate aldolase GatYZ that is required for full activity and stability of the Y subunit. Could have a chaperone-like function for the proper and stable folding of GatY. When expressed alone, GatZ does not show any aldolase activity. Is involved in the catabolism of galactitol. In Escherichia coli O9:H4 (strain HS), this protein is D-tagatose-1,6-bisphosphate aldolase subunit GatZ.